The chain runs to 141 residues: MQLTSFTDYALRTLIYLASLPKDELTNITEVTDLFGVSRNHMVKVINRLGQLGYVHTVRGKNGGIRLMKPASEITVGGVVRDLEPLDLVNCGVEFCHITPACRLKDKLAKAKSAFLAELDECTIESLLSDNSELLILLARP.

Residues 2 to 129 enclose the HTH rrf2-type domain; sequence QLTSFTDYAL…DECTIESLLS (128 aa). The segment at residues 28–51 is a DNA-binding region (H-T-H motif); that stretch reads ITEVTDLFGVSRNHMVKVINRLGQ. [2Fe-2S] cluster is bound by residues Cys-91, Cys-96, and Cys-102.

Requires [2Fe-2S] cluster as cofactor.

In terms of biological role, nitric oxide-sensitive repressor of genes involved in protecting the cell against nitrosative stress. May require iron for activity. The polypeptide is HTH-type transcriptional repressor NsrR (Vibrio parahaemolyticus serotype O3:K6 (strain RIMD 2210633)).